The following is a 482-amino-acid chain: Aspartic proteinase 36 (482 aa).

The N-terminal stretch at 1 to 27 (MVTTMDPSRISRIVAVVFVLVIQVVSG) is a signal peptide. N32 carries an N-linked (GlcNAc...) asparagine glycan. A Peptidase A1 domain is found at 78 to 429 (YFTKIKLGSP…DLENEVIGWA (352 aa)). D96 is an active-site residue. N-linked (GlcNAc...) asparagine glycosylation is found at N178, N204, and N226. The active site involves D310. A disulfide bridge links C347 with C388. A glycan (N-linked (GlcNAc...) asparagine) is linked at N432. S456 is lipidated: GPI-anchor amidated serine. Residues 457 to 482 (AASSVMNGTLVTLLSILIWVFHSFTS) constitute a propeptide, removed in mature form. N463 carries an N-linked (GlcNAc...) asparagine glycan.

Belongs to the peptidase A1 family. In terms of tissue distribution, highly expressed in pollen and pollen tubes. Mostly expressed in roots, flowers and inflorescence, and at lower levels in stems, seedlings and siliques.

Its subcellular location is the cell membrane. It localises to the cytoplasm. The protein resides in the cytosol. Functionally, displays aspartic proteolytic activity. Together with A39, contributes to pollen and ovule development, including the apical cell wall constitution of the growing pollen tubes. The polypeptide is Aspartic proteinase 36 (Arabidopsis thaliana (Mouse-ear cress)).